The sequence spans 280 residues: 2-dehydro-3-deoxyphosphooctonate aldolase (280 aa).

It belongs to the KdsA family.

The protein resides in the cytoplasm. The enzyme catalyses D-arabinose 5-phosphate + phosphoenolpyruvate + H2O = 3-deoxy-alpha-D-manno-2-octulosonate-8-phosphate + phosphate. It participates in carbohydrate biosynthesis; 3-deoxy-D-manno-octulosonate biosynthesis; 3-deoxy-D-manno-octulosonate from D-ribulose 5-phosphate: step 2/3. The protein operates within bacterial outer membrane biogenesis; lipopolysaccharide biosynthesis. This is 2-dehydro-3-deoxyphosphooctonate aldolase from Neisseria gonorrhoeae (strain NCCP11945).